The primary structure comprises 120 residues: Large ribosomal subunit protein uL18 (120 aa).

A disordered region spans residues 1-29 (MITKPNKNAGRKKRHAHVRRTLSGTPQRP). The span at 9-20 (AGRKKRHAHVRR) shows a compositional bias: basic residues.

The protein belongs to the universal ribosomal protein uL18 family. Part of the 50S ribosomal subunit; part of the 5S rRNA/L5/L18/L25 subcomplex. Contacts the 5S and 23S rRNAs.

This is one of the proteins that bind and probably mediate the attachment of the 5S RNA into the large ribosomal subunit, where it forms part of the central protuberance. The chain is Large ribosomal subunit protein uL18 from Shouchella clausii (strain KSM-K16) (Alkalihalobacillus clausii).